The primary structure comprises 81 residues: MVTIRLARGGAKKRPFYQVVVADSRNSRDGRFIEKVGFFNPTAQGQAEKLRLDLDRITHWVGQGATVSDRVAKLVKDATAA.

It belongs to the bacterial ribosomal protein bS16 family.

The chain is Small ribosomal subunit protein bS16 from Colwellia psychrerythraea (strain 34H / ATCC BAA-681) (Vibrio psychroerythus).